The chain runs to 186 residues: Large ribosomal subunit protein uL5 (186 aa).

It belongs to the universal ribosomal protein uL5 family. In terms of assembly, part of the 50S ribosomal subunit; part of the 5S rRNA/L5/L18/L25 subcomplex. Contacts the 5S rRNA and the P site tRNA. Forms a bridge to the 30S subunit in the 70S ribosome.

This is one of the proteins that bind and probably mediate the attachment of the 5S RNA into the large ribosomal subunit, where it forms part of the central protuberance. In the 70S ribosome it contacts protein S13 of the 30S subunit (bridge B1b), connecting the 2 subunits; this bridge is implicated in subunit movement. Contacts the P site tRNA; the 5S rRNA and some of its associated proteins might help stabilize positioning of ribosome-bound tRNAs. The polypeptide is Large ribosomal subunit protein uL5 (Cereibacter sphaeroides (strain ATCC 17029 / ATH 2.4.9) (Rhodobacter sphaeroides)).